We begin with the raw amino-acid sequence, 208 residues long: 3,4-dihydroxy-2-butanone 4-phosphate synthase (208 aa).

Residue T3 is modified to Phosphothreonine. E27 contacts Mg(2+). D31 is a binding site for D-ribulose 5-phosphate. C56 carries the post-translational modification S-glutathionyl cysteine; by GRX2. Residues T88 and 145–149 (RRGHT) each bind D-ribulose 5-phosphate. H148 lines the Mg(2+) pocket.

This sequence belongs to the DHBP synthase family. Homodimer. Mg(2+) serves as cofactor. Requires Mn(2+) as cofactor. In terms of processing, S-glutathionylation of Cys-56 is reversible and dependent on the cytoplasmic isoform of glutaredoxin-2.

The protein localises to the cytoplasm. It localises to the nucleus. It is found in the mitochondrion intermembrane space. It carries out the reaction D-ribulose 5-phosphate = (2S)-2-hydroxy-3-oxobutyl phosphate + formate + H(+). It functions in the pathway cofactor biosynthesis; riboflavin biosynthesis; 2-hydroxy-3-oxobutyl phosphate from D-ribulose 5-phosphate: step 1/1. Catalyzes the conversion of D-ribulose 5-phosphate to formate and 3,4-dihydroxy-2-butanone 4-phosphate. Also has an unrelated function in expression of mitochondrial respiration. The protein is 3,4-dihydroxy-2-butanone 4-phosphate synthase (RIB3) of Saccharomyces cerevisiae (strain ATCC 204508 / S288c) (Baker's yeast).